The following is a 158-amino-acid chain: Probable host range protein 2-1 (158 aa).

Belongs to the poxviridae C7 protein family.

In terms of biological role, plays a role for multiplication of the virus in different cell types. The protein is Probable host range protein 2-1 of Rabbit fibroma virus (strain Kasza) (RFV).